The chain runs to 165 residues: UPF0303 protein Rleg2_2653 (165 aa).

It belongs to the UPF0303 family.

The polypeptide is UPF0303 protein Rleg2_2653 (Rhizobium leguminosarum bv. trifolii (strain WSM2304)).